The primary structure comprises 114 residues: Macrophage migration inhibitory factor homolog (114 aa).

The Proton acceptor; via imino nitrogen role is filled by Pro2. Substrate is bound by residues Lys33 and Ile65.

This sequence belongs to the MIF family.

The protein resides in the secreted. It carries out the reaction L-dopachrome = 5,6-dihydroxyindole-2-carboxylate. The enzyme catalyses 3-phenylpyruvate = enol-phenylpyruvate. Functionally, tautomerization of the methyl ester of L-dopachrome. Inhibits migration of human peripheral blood mononuclear cells. The sequence is that of Macrophage migration inhibitory factor homolog from Trichinella spiralis (Trichina worm).